A 429-amino-acid chain; its full sequence is Phosphoribosylamine--glycine ligase (429 aa).

An ATP-grasp domain is found at 109–316 (KDFLARHKIP…LVELCLAACE (208 aa)). 135 to 196 (LREKGAPIVI…EEFLDGEEAS (62 aa)) contributes to the ATP binding site. The disordered stretch occupies residues 212–236 (SQDHKRVGDKDTGPNTGGMGAYSPA). The segment covering 213–223 (QDHKRVGDKDT) has biased composition (basic and acidic residues). Mg(2+) is bound by residues Glu-286 and Asn-288.

Belongs to the GARS family. Monomer. Mg(2+) is required as a cofactor. It depends on Mn(2+) as a cofactor.

The catalysed reaction is 5-phospho-beta-D-ribosylamine + glycine + ATP = N(1)-(5-phospho-beta-D-ribosyl)glycinamide + ADP + phosphate + H(+). Its pathway is purine metabolism; IMP biosynthesis via de novo pathway; N(1)-(5-phospho-D-ribosyl)glycinamide from 5-phospho-alpha-D-ribose 1-diphosphate: step 2/2. Its function is as follows. Catalyzes the reversible conversion of phosphoribosylamine to glycinamide ribonucleotide, an enzymatic step in purine biosynthesis pathway. The protein is Phosphoribosylamine--glycine ligase (purD) of Escherichia coli (strain K12).